The sequence spans 269 residues: Hydroxyethylthiazole kinase (269 aa).

M42 serves as a coordination point for substrate. ATP-binding residues include R118 and S164. G191 is a binding site for substrate.

This sequence belongs to the Thz kinase family. Requires Mg(2+) as cofactor.

It carries out the reaction 5-(2-hydroxyethyl)-4-methylthiazole + ATP = 4-methyl-5-(2-phosphooxyethyl)-thiazole + ADP + H(+). Its pathway is cofactor biosynthesis; thiamine diphosphate biosynthesis; 4-methyl-5-(2-phosphoethyl)-thiazole from 5-(2-hydroxyethyl)-4-methylthiazole: step 1/1. Catalyzes the phosphorylation of the hydroxyl group of 4-methyl-5-beta-hydroxyethylthiazole (THZ). The chain is Hydroxyethylthiazole kinase from Listeria monocytogenes serovar 1/2a (strain ATCC BAA-679 / EGD-e).